Consider the following 312-residue polypeptide: Porphobilinogen deaminase (312 aa).

Cys241 carries the post-translational modification S-(dipyrrolylmethanemethyl)cysteine.

Belongs to the HMBS family. Monomer. Dipyrromethane is required as a cofactor.

It catalyses the reaction 4 porphobilinogen + H2O = hydroxymethylbilane + 4 NH4(+). The protein operates within porphyrin-containing compound metabolism; protoporphyrin-IX biosynthesis; coproporphyrinogen-III from 5-aminolevulinate: step 2/4. In terms of biological role, tetrapolymerization of the monopyrrole PBG into the hydroxymethylbilane pre-uroporphyrinogen in several discrete steps. The protein is Porphobilinogen deaminase of Cytophaga hutchinsonii (strain ATCC 33406 / DSM 1761 / CIP 103989 / NBRC 15051 / NCIMB 9469 / D465).